The primary structure comprises 528 residues: GMP synthase [glutamine-hydrolyzing] (528 aa).

The Glutamine amidotransferase type-1 domain occupies 13–204 (SILILDFGSQ…VYSISKCKAD (192 aa)). The Nucleophile role is filled by Cys90. Residues His178 and Glu180 contribute to the active site. The GMPS ATP-PPase domain maps to 205–403 (WNTETFLEET…LGLPDEIIKR (199 aa)). 232 to 238 (SGGVDSS) lines the ATP pocket.

Homodimer.

The catalysed reaction is XMP + L-glutamine + ATP + H2O = GMP + L-glutamate + AMP + diphosphate + 2 H(+). Its pathway is purine metabolism; GMP biosynthesis; GMP from XMP (L-Gln route): step 1/1. Its function is as follows. Catalyzes the synthesis of GMP from XMP. This Prochlorococcus marinus (strain MIT 9515) protein is GMP synthase [glutamine-hydrolyzing].